Consider the following 1657-residue polypeptide: Putative serine/threonine-protein kinase/receptor R826 (1657 aa).

An N-terminal signal peptide occupies residues 1–23; it reads MRLNSQIVFCIVVVISCLSMIEC. N-linked (GlcNAc...) asparagine; by host glycosylation is found at N153, N178, N238, N255, N352, N454, N476, N494, and N596. Residues 742-762 form a helical membrane-spanning segment; that stretch reads IILAVVIPIAFIIVCIICILV. The 264-residue stretch at 786–1049 folds into the Protein kinase 1 domain; it reads LELGEQLGTG…EIMTRLSNLM (264 aa). Residues 792–800 and K813 each bind ATP; that span reads LGTGAFGEV. The Proton acceptor role is filled by D909. Residues 1089–1115 form a disordered region; that stretch reads VQNSYNRTDSYDLGSNNSHSSITSDTN. The Guanylate cyclase domain occupies 1134–1277; the sequence is VVVFTDIISA…PTVTTAAAVT (144 aa). The Protein kinase 2 domain maps to 1399–1651; the sequence is IKMGEQIGLG…DDVIIVLAKF (253 aa). ATP is bound by residues 1405 to 1413 and K1426; that span reads IGLGSYGVV. Residue D1522 is the Proton acceptor of the active site.

It is found in the membrane. It carries out the reaction L-seryl-[protein] + ATP = O-phospho-L-seryl-[protein] + ADP + H(+). The enzyme catalyses L-threonyl-[protein] + ATP = O-phospho-L-threonyl-[protein] + ADP + H(+). This is Putative serine/threonine-protein kinase/receptor R826 from Acanthamoeba polyphaga mimivirus (APMV).